The primary structure comprises 482 residues: Catalase (482 aa).

Residues 1-11 (MNAMTNKTLTT) show a composition bias toward polar residues. The disordered stretch occupies residues 1-21 (MNAMTNKTLTTAAGAPVADNN). Residues histidine 57 and asparagine 130 contribute to the active site. Residue tyrosine 340 coordinates heme.

It belongs to the catalase family. As to quaternary structure, homodimer. Heme is required as a cofactor.

The enzyme catalyses 2 H2O2 = O2 + 2 H2O. Its function is as follows. Decomposes hydrogen peroxide into water and oxygen; serves to protect cells from the toxic effects of hydrogen peroxide. The chain is Catalase (katA) from Bordetella bronchiseptica (strain ATCC BAA-588 / NCTC 13252 / RB50) (Alcaligenes bronchisepticus).